The chain runs to 95 residues: Integration host factor subunit beta (95 aa).

It belongs to the bacterial histone-like protein family. In terms of assembly, heterodimer of an alpha and a beta chain.

This protein is one of the two subunits of integration host factor, a specific DNA-binding protein that functions in genetic recombination as well as in transcriptional and translational control. This is Integration host factor subunit beta from Erwinia tasmaniensis (strain DSM 17950 / CFBP 7177 / CIP 109463 / NCPPB 4357 / Et1/99).